Here is a 574-residue protein sequence, read N- to C-terminus: Pescadillo homolog (574 aa).

The interval 289–312 (PSEPNDDTEVDEFPADPENAGLEE) is disordered. A compositionally biased stretch (acidic residues) spans 292-303 (PNDDTEVDEFPA). Positions 323-416 (KHKSLFVGLK…LLLPVEDYFP (94 aa)) constitute a BRCT domain. Residues 452-486 (LGLDEEDDDDDDDDEEEDDDDDEEEEDKKLRQLEN) form a disordered region. Over residues 453–477 (GLDEEDDDDDDDDEEEDDDDDEEEE) the composition is skewed to acidic residues.

It belongs to the pescadillo family. As to quaternary structure, component of the PeBoW complex, composed of bop1, pes1 and wdr12. The complex is held together by bop1, which interacts with pes1 via its N-terminal domain and with wdr12 via a high-affinity interaction between the seven-bladed beta-propeller domains of the 2 proteins. The PeBoW complex associates with the 66S pre-ribosome.

Its subcellular location is the nucleus. It is found in the nucleolus. The protein resides in the nucleoplasm. In terms of biological role, component of the PeBoW complex, which is required for maturation of 28S and 5.8S ribosomal RNAs and formation of the 60S ribosome. Required for neural crest migration and eye development. This is Pescadillo homolog (pes1) from Xenopus laevis (African clawed frog).